We begin with the raw amino-acid sequence, 93 residues long: Small ribosomal subunit protein bS16 (93 aa).

It belongs to the bacterial ribosomal protein bS16 family.

The protein is Small ribosomal subunit protein bS16 of Dictyoglomus thermophilum (strain ATCC 35947 / DSM 3960 / H-6-12).